A 485-amino-acid polypeptide reads, in one-letter code: Sperm-associated antigen 8 (485 aa).

Disordered stretches follow at residues Met-1 to Ser-42, Lys-75 to Ala-98, and Thr-127 to Pro-215. Low complexity predominate over residues Ser-132–Ser-150. Residues Ser-151–Ser-191 are compositionally biased toward gly residues. Mn stretches follow at residues Ser-327–Asn-340 and Glu-379–Ala-393.

This sequence belongs to the SPAG8 family. In terms of assembly, microtubule inner protein component of sperm flagellar doublet microtubules. Interacts with FHL5 (via second LIM domain). Interacts with RANBP9. As to expression, expressed in testis (germ cells), but not in liver, kidney, prostate and small intestine. Expressed in airway epithelial cells.

The protein localises to the cytoplasm. It localises to the nucleus. The protein resides in the cytoplasmic vesicle. It is found in the secretory vesicle. Its subcellular location is the acrosome. The protein localises to the cytoskeleton. It localises to the microtubule organizing center. The protein resides in the spindle. It is found in the cilium axoneme. Its subcellular location is the flagellum axoneme. In terms of biological role, microtubule inner protein (MIP) part of the dynein-decorated doublet microtubules (DMTs) in cilia axoneme, which is required for motile cilia beating. Plays a role in spermatogenesis by enhancing the binding of CREM isoform tau to its coactivator FHL5 and increasing the FHL5-regulated transcriptional activation of CREM isoform tau. Involved in the acrosome reaction and in binding of sperm to the zona pellucida. Plays a role in regulation of the cell cycle by controlling progression through the G2/M phase, possibly by delaying the activation of CDK1 which is required for entry into mitosis. May play a role in fertility and microtubule formation through interaction with RANBP9. This chain is Sperm-associated antigen 8, found in Homo sapiens (Human).